We begin with the raw amino-acid sequence, 492 residues long: NADH-quinone oxidoreductase subunit N (492 aa).

Transmembrane regions (helical) follow at residues 18–38, 45–65, 80–100, 108–128, 133–153, 167–187, 209–229, 250–270, 277–297, 305–325, 333–353, 381–401, 415–435, and 464–484; these read ILPMLVLVCGGIFTLLINAFT, LNMFLCMLFLVLDFLVVLGLE, LSLVSQSIVLISAFLLIFLAL, FQTAEFYPLYLFIIAGFQFMV, LLLMLIGLETASLPICVLMAL, FTMGAMASAFFAMGAMAFYLL, MLFAMGVIFLIGAIGFKVSLV, ISIVPKIAGFVVATRLFGAFI, VEDIFYALILITITIPNLIAL, MLAYSSISHSGFALACVFIHT, FVYWFMFAFTYIGAFGLLWLL, VAILGAIFVFGLAGIPPFSVF, NHILLAAVMLANSAVAVFYYF, and MPIYAVIIAMALVCLFSVFMM.

It belongs to the complex I subunit 2 family. NDH-1 is composed of 14 different subunits. Subunits NuoA, H, J, K, L, M, N constitute the membrane sector of the complex.

The protein resides in the cell inner membrane. It carries out the reaction a quinone + NADH + 5 H(+)(in) = a quinol + NAD(+) + 4 H(+)(out). Its function is as follows. NDH-1 shuttles electrons from NADH, via FMN and iron-sulfur (Fe-S) centers, to quinones in the respiratory chain. The immediate electron acceptor for the enzyme in this species is believed to be ubiquinone. Couples the redox reaction to proton translocation (for every two electrons transferred, four hydrogen ions are translocated across the cytoplasmic membrane), and thus conserves the redox energy in a proton gradient. The chain is NADH-quinone oxidoreductase subunit N from Helicobacter acinonychis (strain Sheeba).